The sequence spans 244 residues: Thaumatin-like protein 1 (244 aa).

The signal sequence occupies residues 1–22 (MKFEALIGLVLVFLSEHAGVYS). Cystine bridges form between Cys31/Cys243, Cys79/Cys89, Cys94/Cys101, Cys149/Cys232, Cys154/Cys215, Cys162/Cys178, Cys182/Cys191, and Cys192/Cys202. Residue Asn150 is glycosylated (N-linked (GlcNAc...) asparagine).

It belongs to the thaumatin family. Post-translationally, N-glycosylated. In terms of tissue distribution, style.

Its subcellular location is the secreted. This Pyrus pyrifolia (Chinese pear) protein is Thaumatin-like protein 1 (TL1).